The sequence spans 262 residues: Small ribosomal subunit protein eS1 (262 aa).

Basic and acidic residues predominate over residues 235–253; the sequence is HGDGKGSDEPGAKVSRPEA. The disordered stretch occupies residues 235-262; that stretch reads HGDGKGSDEPGAKVSRPEAYEPPVQESV.

It belongs to the eukaryotic ribosomal protein eS1 family. In terms of assembly, component of the small ribosomal subunit. Mature ribosomes consist of a small (40S) and a large (60S) subunit. The 40S subunit contains about 33 different proteins and 1 molecule of RNA (18S). The 60S subunit contains about 49 different proteins and 3 molecules of RNA (28S, 5.8S and 5S).

Its subcellular location is the cytoplasm. This chain is Small ribosomal subunit protein eS1, found in Triatoma infestans (Assassin bug).